The sequence spans 66 residues: Large ribosomal subunit protein uL30 (66 aa).

Belongs to the universal ribosomal protein uL30 family. In terms of assembly, part of the 50S ribosomal subunit.

This Brucella anthropi (strain ATCC 49188 / DSM 6882 / CCUG 24695 / JCM 21032 / LMG 3331 / NBRC 15819 / NCTC 12168 / Alc 37) (Ochrobactrum anthropi) protein is Large ribosomal subunit protein uL30.